The chain runs to 194 residues: Translation machinery-associated protein 22 (194 aa).

One can recognise an SUI1 domain in the interval 102 to 173 (VQIKRVERNK…DVQDWLLEVY (72 aa)).

Belongs to the DENR family. As to quaternary structure, interacts with the 40S ribosomal subunit.

The protein localises to the cytoplasm. This chain is Translation machinery-associated protein 22 (tma22), found in Aspergillus oryzae (strain ATCC 42149 / RIB 40) (Yellow koji mold).